Reading from the N-terminus, the 154-residue chain is uncharacterized protein (154 aa).

Positions 1–37 (MDNLKEKPLSYNINNNNLNNNNNNNNNNNNNNNNINN) are disordered. A compositionally biased stretch (low complexity) spans 12–37 (NINNNNLNNNNNNNNNNNNNNNNINN). The N-linked (GlcNAc...) asparagine glycan is linked to Asn-82. The chain crosses the membrane as a helical span at residues 116–136 (IIITTIVVLLMIAVSLGLILA). Asn-149 carries N-linked (GlcNAc...) asparagine glycosylation.

It localises to the membrane. This is an uncharacterized protein from Dictyostelium discoideum (Social amoeba).